Reading from the N-terminus, the 495-residue chain is Monoamine oxidase N (495 aa).

Polar residues predominate over residues 1-19 (MTSRDGYQWTPETGLTQGV). The tract at residues 1–23 (MTSRDGYQWTPETGLTQGVPSLG) is disordered. A Microbody targeting signal motif is present at residues 493 to 495 (ARL).

The protein belongs to the flavin monoamine oxidase family. The cofactor is FAD.

It is found in the peroxisome. The enzyme catalyses a secondary aliphatic amine + O2 + H2O = a primary amine + an aldehyde + H2O2. The protein is Monoamine oxidase N (maoN) of Aspergillus niger.